Here is a 674-residue protein sequence, read N- to C-terminus: Anosmin-1 (674 aa).

Residues 1 to 21 (MVRRAPGASLALLLWVTAVSC) form the signal peptide. 4 disulfides stabilise this stretch: Cys-47/Cys-71, Cys-80/Cys-99, Cys-84/Cys-95, and Cys-110/Cys-114. A glycan (N-linked (GlcNAc...) asparagine) is linked at Asn-65. One can recognise a WAP domain in the interval 121 to 170 (LSVKQGDCPAPEKASGFAAACFESCEADSECSGVKKCCSNGCGHTCQVPK). 4 Fibronectin type-III domains span residues 180–281 (PRKE…SKDP), 286–392 (APSN…TTQD), 418–515 (RRKP…FFVT), and 545–652 (KPEN…DLPP). N-linked (GlcNAc...) asparagine glycosylation is found at Asn-203 and Asn-294. Over residues 388 to 402 (STTQDNRNNNEQTSV) the composition is skewed to polar residues. The interval 388-413 (STTQDNRNNNEQTSVEKPPKGVVDPY) is disordered. N-linked (GlcNAc...) asparagine glycans are attached at residues Asn-465, Asn-548, and Asn-559. Residues 655–674 (PHRPHLKHHPHRYKPPPEKY) form a disordered region. Basic residues predominate over residues 656–668 (HRPHLKHHPHRYK).

It is found in the cell surface. Its function is as follows. May be an adhesion-like molecule with anti-protease activity. The protein is Anosmin-1 of Coturnix japonica (Japanese quail).